The chain runs to 370 residues: GTPase Obg (370 aa).

The 159-residue stretch at 1 to 159 folds into the Obg domain; the sequence is MKFIDEARIE…RMLRLELKVL (159 aa). Residues 127–146 are disordered; that stretch reads NLHFKSSTNRAPRQKTDGKP. The 175-residue stretch at 160-334 folds into the OBG-type G domain; sequence ADVGLLGMPN…LCYAIYDYLA (175 aa). GTP is bound by residues 166–173, 191–195, 213–216, 284–287, and 315–317; these read GMPNAGKS, FTTLA, DIPG, NKLD, and SAL. Positions 173 and 193 each coordinate Mg(2+). The disordered stretch occupies residues 350 to 370; sequence ADVRFRDAPPSDGGATSGGDA.

Belongs to the TRAFAC class OBG-HflX-like GTPase superfamily. OBG GTPase family. Monomer. Mg(2+) serves as cofactor.

Its subcellular location is the cytoplasm. In terms of biological role, an essential GTPase which binds GTP, GDP and possibly (p)ppGpp with moderate affinity, with high nucleotide exchange rates and a fairly low GTP hydrolysis rate. Plays a role in control of the cell cycle, stress response, ribosome biogenesis and in those bacteria that undergo differentiation, in morphogenesis control. The polypeptide is GTPase Obg (Burkholderia vietnamiensis (strain G4 / LMG 22486) (Burkholderia cepacia (strain R1808))).